The following is a 176-amino-acid chain: Disulfide bond formation protein B (176 aa).

At 1–14 (MLRFLNQCSRGRGA) the chain is on the cytoplasmic side. The helical transmembrane segment at 15-31 (WLLMAFTALALEMVALW) threads the bilayer. Topologically, residues 32 to 49 (FQHVMLLKPCVLCIYERC) are periplasmic. Residues Cys-41 and Cys-44 are joined by a disulfide bond. The chain crosses the membrane as a helical span at residues 50–65 (ALFGVMGAGLVGAIAP). The Cytoplasmic segment spans residues 66-71 (KTPLRY). A helical membrane pass occupies residues 72–89 (VAMVIWIYSAWRGLQLAY). The Periplasmic portion of the chain corresponds to 90-144 (EHTMIQLHPSPFMTCDFMARFPDWLPLGKWLPQVFVASGDCAERQWSFLTLEMPQ). Cysteines 104 and 130 form a disulfide. A helical transmembrane segment spans residues 145 to 163 (WLLGIFAAYLVVAIAVVIA). At 164–176 (QAFKPKKRDLFGR) the chain is on the cytoplasmic side.

Belongs to the DsbB family.

Its subcellular location is the cell inner membrane. Functionally, required for disulfide bond formation in some periplasmic proteins. Acts by oxidizing the DsbA protein. This chain is Disulfide bond formation protein B, found in Salmonella paratyphi A (strain ATCC 9150 / SARB42).